The chain runs to 247 residues: Ubiquinone biosynthesis O-methyltransferase (247 aa).

S-adenosyl-L-methionine is bound by residues Arg39, Gly70, Asp91, and Met134.

Belongs to the methyltransferase superfamily. UbiG/COQ3 family.

It catalyses the reaction a 3-demethylubiquinol + S-adenosyl-L-methionine = a ubiquinol + S-adenosyl-L-homocysteine + H(+). It carries out the reaction a 3-(all-trans-polyprenyl)benzene-1,2-diol + S-adenosyl-L-methionine = a 2-methoxy-6-(all-trans-polyprenyl)phenol + S-adenosyl-L-homocysteine + H(+). The protein operates within cofactor biosynthesis; ubiquinone biosynthesis. Functionally, O-methyltransferase that catalyzes the 2 O-methylation steps in the ubiquinone biosynthetic pathway. In Cereibacter sphaeroides (strain ATCC 17025 / ATH 2.4.3) (Rhodobacter sphaeroides), this protein is Ubiquinone biosynthesis O-methyltransferase.